We begin with the raw amino-acid sequence, 360 residues long: 1-aminocyclopropane-1-carboxylate oxidase homolog 6 (360 aa).

One can recognise a Fe2OG dioxygenase domain in the interval 208–309 (KGLLLLCHYY…ISVASFFSTS (102 aa)). 3 residues coordinate Fe cation: His232, Asp234, and His288. 2-oxoglutarate is bound at residue Arg299.

Belongs to the iron/ascorbate-dependent oxidoreductase family. Fe(2+) is required as a cofactor. In terms of tissue distribution, constitutively expressed in leaves and blades.

This Arabidopsis thaliana (Mouse-ear cress) protein is 1-aminocyclopropane-1-carboxylate oxidase homolog 6.